Reading from the N-terminus, the 135-residue chain is uncharacterized protein (135 aa).

This is an uncharacterized protein from Aquifex aeolicus (strain VF5).